A 365-amino-acid polypeptide reads, in one-letter code: Putative ankyrin repeat protein R903 (365 aa).

ANK repeat units follow at residues 38-67 (NINS…DIRF), 68-97 (QNNE…DIFI), 99-127 (NNFC…KFSN), 129-158 (SKPI…NINK), 184-213 (KFKD…GNIT), 214-243 (VSNN…RFPR), 245-273 (SNEL…SIVD), 275-298 (LLNI…LKNV), 299-328 (NLQK…NPDE), and 330-361 (RTYL…KLQS).

This Acanthamoeba polyphaga mimivirus (APMV) protein is Putative ankyrin repeat protein R903.